Here is a 79-residue protein sequence, read N- to C-terminus: MSQEILEKVCSIVSEQLSVEAAEVKSDSNFQNDLGADSLDTVELVMALEEAFDIEIPDEAAEGIATVGDAVKFIEEKKG.

In terms of domain architecture, Carrier spans 3 to 78; the sequence is QEILEKVCSI…DAVKFIEEKK (76 aa). Serine 38 is modified (O-(pantetheine 4'-phosphoryl)serine).

It belongs to the acyl carrier protein (ACP) family. Post-translationally, 4'-phosphopantetheine is transferred from CoA to a specific serine of apo-ACP by AcpS. This modification is essential for activity because fatty acids are bound in thioester linkage to the sulfhydryl of the prosthetic group.

It localises to the cytoplasm. Its pathway is lipid metabolism; fatty acid biosynthesis. Its function is as follows. Carrier of the growing fatty acid chain in fatty acid biosynthesis. The protein is Acyl carrier protein of Prochlorococcus marinus (strain MIT 9312).